The primary structure comprises 1359 residues: ABC transporter C family member 1 (1359 aa).

In terms of domain architecture, ABC transmembrane type-1 1 spans 111–394 (NKLTIFLQIL…LPNSIQQLQS (284 aa)). A run of 6 helical transmembrane segments spans residues 119–139 (ILTN…IQFI), 147–167 (SFLA…SYTF), 214–234 (LLSV…MGIF), 244–264 (LALL…IMVI), 332–352 (MIFW…VLVL), and 363–383 (ITLE…IPLL). The segment at 409–478 (PEIQQNHSSN…QQQQQQQQQQ (70 aa)) is disordered. Residues 420-433 (EEEEEDEYDDDINS) show a composition bias toward acidic residues. A compositionally biased stretch (polar residues) spans 440 to 450 (HNGSFNWNQVD). Positions 459-478 (GNQQQQQQQQQQQQQQQQQQ) are enriched in low complexity. Residues 470–690 (QQQQQQQQQQ…IDFESIMKTK (221 aa)) form the ABC transporter 1 domain. 502–509 (GVVGSGKT) lines the ATP pocket. One can recognise an ABC transmembrane type-1 2 domain in the interval 763 to 1061 (LRVYKEYFKH…LEVKMNSVER (299 aa)). Helical transmembrane passes span 773–793 (GSSI…QIIY), 819–839 (IYLL…FMMA), 884–904 (VDLL…TVLV), 906–926 (IGIM…LIGI), and 999–1021 (WVAV…FSLF). Positions 1073–1102 (NSKINFFRNEQQEEEEEEEEEFDFDNDDYD) form a coiled coil. An ABC transporter 2 domain is found at 1116 to 1350 (IEFRNVEIKY…QESRFSKLVK (235 aa)). 1150 to 1157 (GRTGAGKS) serves as a coordination point for ATP.

Belongs to the ABC transporter superfamily. ABCC family. Conjugate transporter (TC 3.A.1.208) subfamily.

It is found in the membrane. This is ABC transporter C family member 1 (abcC1) from Dictyostelium discoideum (Social amoeba).